Here is a 596-residue protein sequence, read N- to C-terminus: uncharacterized protein (596 aa).

Positions 44-203 (KYLASQPRDF…PFVTYALDAD (160 aa)) constitute a Helicase ATP-binding domain. The 148-residue stretch at 285–432 (RLRQLRTHVP…PHRESTDNPL (148 aa)) folds into the Helicase C-terminal domain. 2 disordered regions span residues 420-444 (LGKP…QTEQ) and 506-533 (EQLQ…SVHG). Positions 510–523 (KRTAAQQASSTPDR) are enriched in polar residues.

This sequence to M.tuberculosis Rv2917.

This is an uncharacterized protein from Mycobacterium leprae (strain TN).